Here is a 286-residue protein sequence, read N- to C-terminus: Sulfate transport system permease protein CysW (286 aa).

6 consecutive transmembrane segments (helical) span residues 20–40 (LLPL…IIIP), 74–94 (LMGV…AFAI), 108–128 (VIDL…VLLY), 145–165 (IIFA…PFVA), 207–227 (LYGV…VSVV), and 255–275 (YTAA…KALL). The ABC transmembrane type-1 domain maps to 69-272 (IRLTLLMGVI…GISLVTLVLK (204 aa)).

This sequence belongs to the binding-protein-dependent transport system permease family. CysTW subfamily. In terms of assembly, the complex is composed of two ATP-binding proteins (CysA), two transmembrane proteins (CysT and CysW) and a solute-binding protein (CysP).

It is found in the cell inner membrane. Its function is as follows. Part of the ABC transporter complex CysAWTP (TC 3.A.1.6.1) involved in sulfate/thiosulfate import. Probably responsible for the translocation of the substrate across the membrane. This is Sulfate transport system permease protein CysW (cysW) from Synechococcus elongatus (strain ATCC 33912 / PCC 7942 / FACHB-805) (Anacystis nidulans R2).